The following is a 270-amino-acid chain: 5'-AMP-activated protein kinase subunit beta-1 (270 aa).

Residues 1 to 44 are disordered; that stretch reads MGNTSSERAALERQAGHKTPRRDSSGGAKDGDRPKILMDSPEDA. The N-myristoyl glycine moiety is linked to residue G2. T4 carries the post-translational modification Phosphothreonine. 2 positions are modified to phosphoserine: S5 and S6. A compositionally biased stretch (basic and acidic residues) spans 9–36; sequence AALERQAGHKTPRRDSSGGAKDGDRPKI. Position 19 is a phosphothreonine (T19). Phosphoserine; by autocatalysis occurs at positions 24 and 25. A phosphoserine mark is found at S40, S96, and S101. A glycogen-binding domain region spans residues 68–163; it reads EANDKAPAQA…QVKKTDFEVF (96 aa). Residue S108 is modified to Phosphoserine; by autocatalysis. T148 is modified (phosphothreonine). S182 is subject to Phosphoserine. K201 is subject to N6-succinyllysine.

It belongs to the 5'-AMP-activated protein kinase beta subunit family. AMPK is a heterotrimer of an alpha catalytic subunit (PRKAA1 or PRKAA2), a beta (PRKAB1 or PRKAB2) and a gamma non-catalytic subunits (PRKAG1, PRKAG2 or PRKAG3). Interacts with FNIP1 and FNIP2. Post-translationally, phosphorylated when associated with the catalytic subunit (PRKAA1 or PRKAA2). Phosphorylated by ULK1; leading to negatively regulate AMPK activity and suggesting the existence of a regulatory feedback loop between ULK1 and AMPK.

In terms of biological role, non-catalytic subunit of AMP-activated protein kinase (AMPK), an energy sensor protein kinase that plays a key role in regulating cellular energy metabolism. In response to reduction of intracellular ATP levels, AMPK activates energy-producing pathways and inhibits energy-consuming processes: inhibits protein, carbohydrate and lipid biosynthesis, as well as cell growth and proliferation. AMPK acts via direct phosphorylation of metabolic enzymes, and by longer-term effects via phosphorylation of transcription regulators. Also acts as a regulator of cellular polarity by remodeling the actin cytoskeleton; probably by indirectly activating myosin. Beta non-catalytic subunit acts as a scaffold on which the AMPK complex assembles, via its C-terminus that bridges alpha (PRKAA1 or PRKAA2) and gamma subunits (PRKAG1, PRKAG2 or PRKAG3). The chain is 5'-AMP-activated protein kinase subunit beta-1 (Prkab1) from Mus musculus (Mouse).